The chain runs to 315 residues: Gamma-hemolysin component C (315 aa).

An N-terminal signal peptide occupies residues 1 to 29; the sequence is MLKNKILATTLSVSLLAPLANPLLENAKA.

This sequence belongs to the aerolysin family. As to quaternary structure, toxicity requires sequential binding and synergistic association of a class S and a class F component which form heterooligomeric complexes. HlgC (class S) associates with HlgB (class F) thus forming an CB toxin.

Functionally, toxin that seems to act by forming pores in the membrane of the cell. Has a hemolytic and a leucotoxic activity. The sequence is that of Gamma-hemolysin component C (hlgC) from Staphylococcus aureus (strain MRSA252).